Reading from the N-terminus, the 3174-residue chain is Intermembrane lipid transfer protein VPS13A (3174 aa).

Residues 3–116 (FESVVVDVLN…LMEAKQQELK (114 aa)) enclose the Chorein N-terminal domain. TPR repeat units follow at residues 212–245 (LFAYWNVKSQMFYLSDYDNSLDDLKNGIVNENIV), 373–406 (LTSKKPPGELLVSLEELEKTLDVFNITIARQTAE), and 537–575 (IDSFHITGLPDNSEKPRLLSSLDDAMSLFQITFEINPLD). Position 839 is a phosphoserine (S839). The FFAT signature appears at 842-848 (EFFDAPC). TPR repeat units follow at residues 1256–1289 (VIDLITIKLSEMRLYRSRFINDAYQEVLDLLLPL) and 1291–1320 (LEVVVERNLCWEWYQEVPCFNVNAQLKPME). Phosphoserine is present on S1416. One copy of the TPR 6 repeat lies at 2009–2041 (YEGDTLLGTASPENEFNIPLGSYRSFIFLKPED). The SHR-BD domain maps to 2209 to 2454 (VAFHSPYWMV…VFYTWADPVG (246 aa)). TPR repeat units follow at residues 2568–2601 (PMSVKHTEKLEREFKEYTESSPSEDKVIQLDTNV), 2717–2751 (LGFIYALTDLMTEAEVTENTEVELFHKDIEAFKEE), and 2860–2898 (ILGLDVLGNPFGLIREFSEGVEAFFYEPYQGAIQGPEEF). The interval 2751-3174 (EYKTASLVDQ…QEAREPSPSL (424 aa)) is required for mitochondrial localization. Residues 2953 to 3027 (PAGFREGITR…SSTFQGIKRA (75 aa)) are required for lipid droplet localization. The TPR 10 repeat unit spans residues 3086-3119 (MLMITRRGVLFVTKGTFGQLTCEWQYSFDEFTKE).

Belongs to the VPS13 family. In terms of assembly, interacts (via FFAT motif) with VAPA and VAPB. Interacts with RAB7A. Interacts with XK. As to expression, expressed in red blood cells (at protein level). Widely expressed, with high expression in brain, heart, skeletal muscle and kidney.

Its subcellular location is the mitochondrion outer membrane. The protein resides in the endoplasmic reticulum membrane. It is found in the endosome membrane. It localises to the lysosome membrane. The protein localises to the lipid droplet. Its subcellular location is the golgi apparatus. The protein resides in the cytoplasmic vesicle. It is found in the secretory vesicle. It localises to the neuronal dense core vesicle. Its function is as follows. Mediates the transfer of lipids between membranes at organelle contact sites. Binds phospholipids. Required for the formation or stabilization of ER-mitochondria contact sites which enable transfer of lipids between the ER and mitochondria. Negatively regulates lipid droplet size and motility. Required for efficient lysosomal protein degradation. This Homo sapiens (Human) protein is Intermembrane lipid transfer protein VPS13A (VPS13A).